Reading from the N-terminus, the 262-residue chain is Transcription factor of morphogenesis MCM1 (262 aa).

2 disordered regions span residues 1–62 (MAIK…ERRK) and 140–262 (EEGL…QQYQ). Residues 17 to 35 (NSHSTNNNNNSNNSNSNNN) are compositionally biased toward low complexity. Residues 58-118 (KERRKIEIKF…GLVYTFTTPK (61 aa)) form the MADS-box domain. Polar residues predominate over residues 150 to 170 (QSDGNTGDSPDQSPAPATNPN). Low complexity-rich tracts occupy residues 182–198 (QQQQQQQQQAQQQAQQQ), 224–239 (PQQQGQHQPGIPLQGG), and 249–262 (NIQNNNIPNQQQYQ).

Interacts with AHR1.

It is found in the nucleus. Its function is as follows. Transcription factor that is recruited by AHR1 to the promoters of genes involved in biofilm formation, which include several key adhesion genes. Plays an important role in cell adhesion, hyphal growth and virulence. Implicated in the regulation of opaque-phase-specific gene expression. This Candida albicans (strain SC5314 / ATCC MYA-2876) (Yeast) protein is Transcription factor of morphogenesis MCM1 (MCM1).